A 103-amino-acid chain; its full sequence is UPF0145 protein BC_1816 (103 aa).

The protein belongs to the UPF0145 family.

The sequence is that of UPF0145 protein BC_1816 from Bacillus cereus (strain ATCC 14579 / DSM 31 / CCUG 7414 / JCM 2152 / NBRC 15305 / NCIMB 9373 / NCTC 2599 / NRRL B-3711).